Reading from the N-terminus, the 398-residue chain is Succinate--CoA ligase [ADP-forming] subunit beta (398 aa).

The ATP-grasp domain maps to 9-253; that stretch reads MALLNERGVS…AGASDPLEQE (245 aa). ATP contacts are provided by residues Lys46, 53-55, Val111, and Glu116; that span reads GRG. Mg(2+)-binding residues include Asn208 and Asp222. Residues Asn273 and 330 to 332 each bind substrate; that span reads GIM.

The protein belongs to the succinate/malate CoA ligase beta subunit family. Heterotetramer of two alpha and two beta subunits. It depends on Mg(2+) as a cofactor.

It carries out the reaction succinate + ATP + CoA = succinyl-CoA + ADP + phosphate. It catalyses the reaction GTP + succinate + CoA = succinyl-CoA + GDP + phosphate. Its pathway is carbohydrate metabolism; tricarboxylic acid cycle; succinate from succinyl-CoA (ligase route): step 1/1. Its function is as follows. Succinyl-CoA synthetase functions in the citric acid cycle (TCA), coupling the hydrolysis of succinyl-CoA to the synthesis of either ATP or GTP and thus represents the only step of substrate-level phosphorylation in the TCA. The beta subunit provides nucleotide specificity of the enzyme and binds the substrate succinate, while the binding sites for coenzyme A and phosphate are found in the alpha subunit. The protein is Succinate--CoA ligase [ADP-forming] subunit beta of Zymomonas mobilis subsp. mobilis (strain ATCC 31821 / ZM4 / CP4).